Here is a 283-residue protein sequence, read N- to C-terminus: 2-dehydro-3-deoxyphosphooctonate aldolase (283 aa).

The protein belongs to the KdsA family.

The protein resides in the cytoplasm. It catalyses the reaction D-arabinose 5-phosphate + phosphoenolpyruvate + H2O = 3-deoxy-alpha-D-manno-2-octulosonate-8-phosphate + phosphate. The protein operates within carbohydrate biosynthesis; 3-deoxy-D-manno-octulosonate biosynthesis; 3-deoxy-D-manno-octulosonate from D-ribulose 5-phosphate: step 2/3. It participates in bacterial outer membrane biogenesis; lipopolysaccharide biosynthesis. The protein is 2-dehydro-3-deoxyphosphooctonate aldolase of Synechococcus sp. (strain WH7803).